The primary structure comprises 297 residues: Protein MIZU-KUSSEI 1 (297 aa).

In terms of tissue distribution, expressed in root meristematic region, cortical cells, lateral root cap cells, columella cells of the root cap, mature region of the roots and leaf hydathodes.

Its subcellular location is the endoplasmic reticulum membrane. Its function is as follows. Plays a role in lateral root development by maintaining auxin levels. This function requires GNOM (GN/MIZ2) activity. Negatively regulates cytokinin sensitivity on root development. Positively regulates hydrotropism in roots. This Arabidopsis thaliana (Mouse-ear cress) protein is Protein MIZU-KUSSEI 1 (MIZ1).